The primary structure comprises 391 residues: Processive diacylglycerol beta-glucosyltransferase (391 aa).

The protein belongs to the glycosyltransferase 28 family. UgtP subfamily.

It localises to the cell membrane. The enzyme catalyses a 1,2-diacyl-3-O-(beta-D-glucopyranosyl)-sn-glycerol + UDP-alpha-D-glucose = a 1,2-diacyl-3-O-(beta-D-Glc-(1-&gt;6)-beta-D-Glc)-sn-glycerol + UDP + H(+). It carries out the reaction a 1,2-diacyl-sn-glycerol + UDP-alpha-D-glucose = a 1,2-diacyl-3-O-(beta-D-glucopyranosyl)-sn-glycerol + UDP + H(+). It functions in the pathway glycolipid metabolism; diglucosyl-diacylglycerol biosynthesis. Processive glucosyltransferase involved in the biosynthesis of both the bilayer- and non-bilayer-forming membrane glucolipids. Is able to successively transfer two glucosyl residues to diacylglycerol (DAG), thereby catalyzing the formation of beta-monoglucosyl-DAG (3-O-(beta-D-glucopyranosyl)-1,2-diacyl-sn-glycerol) and beta-diglucosyl-DAG (3-O-(beta-D-glucopyranosyl-beta-(1-&gt;6)-D-glucopyranosyl)-1,2-diacyl-sn-glycerol). Beta-diglucosyl-DAG is the predominant glycolipid found in Bacillales and is also used as a membrane anchor for lipoteichoic acid (LTA). The protein is Processive diacylglycerol beta-glucosyltransferase of Staphylococcus aureus (strain bovine RF122 / ET3-1).